We begin with the raw amino-acid sequence, 338 residues long: Anthranilate phosphoribosyltransferase (338 aa).

5-phospho-alpha-D-ribose 1-diphosphate contacts are provided by residues glycine 80, 83–84, threonine 88, 90–93, 108–116, and serine 120; these read GD, NIST, and KHGNRAVSS. Glycine 80 is a binding site for anthranilate. Serine 92 contributes to the Mg(2+) binding site. An anthranilate-binding site is contributed by asparagine 111. Arginine 166 is an anthranilate binding site. 2 residues coordinate Mg(2+): aspartate 225 and glutamate 226.

It belongs to the anthranilate phosphoribosyltransferase family. Homodimer. Mg(2+) serves as cofactor.

It catalyses the reaction N-(5-phospho-beta-D-ribosyl)anthranilate + diphosphate = 5-phospho-alpha-D-ribose 1-diphosphate + anthranilate. The protein operates within amino-acid biosynthesis; L-tryptophan biosynthesis; L-tryptophan from chorismate: step 2/5. Functionally, catalyzes the transfer of the phosphoribosyl group of 5-phosphorylribose-1-pyrophosphate (PRPP) to anthranilate to yield N-(5'-phosphoribosyl)-anthranilate (PRA). In Thermoanaerobacter sp. (strain X514), this protein is Anthranilate phosphoribosyltransferase.